Reading from the N-terminus, the 1060-residue chain is DNA-directed RNA polymerase subunit beta (1060 aa).

This sequence belongs to the RNA polymerase beta chain family. In plastids the minimal PEP RNA polymerase catalytic core is composed of four subunits: alpha, beta, beta', and beta''. When a (nuclear-encoded) sigma factor is associated with the core the holoenzyme is formed, which can initiate transcription.

Its subcellular location is the plastid. It localises to the chloroplast. It catalyses the reaction RNA(n) + a ribonucleoside 5'-triphosphate = RNA(n+1) + diphosphate. In terms of biological role, DNA-dependent RNA polymerase catalyzes the transcription of DNA into RNA using the four ribonucleoside triphosphates as substrates. The protein is DNA-directed RNA polymerase subunit beta of Helianthus annuus (Common sunflower).